The following is a 256-amino-acid chain: 5-oxoprolinase subunit A (256 aa).

This sequence belongs to the LamB/PxpA family. Forms a complex composed of PxpA, PxpB and PxpC.

The enzyme catalyses 5-oxo-L-proline + ATP + 2 H2O = L-glutamate + ADP + phosphate + H(+). Its function is as follows. Catalyzes the cleavage of 5-oxoproline to form L-glutamate coupled to the hydrolysis of ATP to ADP and inorganic phosphate. The sequence is that of 5-oxoprolinase subunit A from Alkaliphilus metalliredigens (strain QYMF).